The following is a 215-amino-acid chain: ATP-dependent Clp protease proteolytic subunit 3 (215 aa).

Residue S119 is the Nucleophile of the active site. Residue H144 is part of the active site.

It belongs to the peptidase S14 family. Fourteen ClpP subunits assemble into 2 heptameric rings which stack back to back to give a disk-like structure with a central cavity, resembling the structure of eukaryotic proteasomes.

The protein localises to the cytoplasm. It catalyses the reaction Hydrolysis of proteins to small peptides in the presence of ATP and magnesium. alpha-casein is the usual test substrate. In the absence of ATP, only oligopeptides shorter than five residues are hydrolyzed (such as succinyl-Leu-Tyr-|-NHMec, and Leu-Tyr-Leu-|-Tyr-Trp, in which cleavage of the -Tyr-|-Leu- and -Tyr-|-Trp bonds also occurs).. In terms of biological role, cleaves peptides in various proteins in a process that requires ATP hydrolysis. Has a chymotrypsin-like activity. Plays a major role in the degradation of misfolded proteins. This Prochlorococcus marinus subsp. pastoris (strain CCMP1986 / NIES-2087 / MED4) protein is ATP-dependent Clp protease proteolytic subunit 3.